We begin with the raw amino-acid sequence, 616 residues long: Dihydroxy-acid dehydratase (616 aa).

Aspartate 81 is a binding site for Mg(2+). Cysteine 122 is a binding site for [2Fe-2S] cluster. 2 residues coordinate Mg(2+): aspartate 123 and lysine 124. The residue at position 124 (lysine 124) is an N6-carboxylysine. A [2Fe-2S] cluster-binding site is contributed by cysteine 195. Glutamate 491 contributes to the Mg(2+) binding site. Residue serine 517 is the Proton acceptor of the active site.

Belongs to the IlvD/Edd family. In terms of assembly, homodimer. Requires [2Fe-2S] cluster as cofactor. It depends on Mg(2+) as a cofactor.

It carries out the reaction (2R)-2,3-dihydroxy-3-methylbutanoate = 3-methyl-2-oxobutanoate + H2O. The enzyme catalyses (2R,3R)-2,3-dihydroxy-3-methylpentanoate = (S)-3-methyl-2-oxopentanoate + H2O. It participates in amino-acid biosynthesis; L-isoleucine biosynthesis; L-isoleucine from 2-oxobutanoate: step 3/4. The protein operates within amino-acid biosynthesis; L-valine biosynthesis; L-valine from pyruvate: step 3/4. In terms of biological role, functions in the biosynthesis of branched-chain amino acids. Catalyzes the dehydration of (2R,3R)-2,3-dihydroxy-3-methylpentanoate (2,3-dihydroxy-3-methylvalerate) into 2-oxo-3-methylpentanoate (2-oxo-3-methylvalerate) and of (2R)-2,3-dihydroxy-3-methylbutanoate (2,3-dihydroxyisovalerate) into 2-oxo-3-methylbutanoate (2-oxoisovalerate), the penultimate precursor to L-isoleucine and L-valine, respectively. In Serratia proteamaculans (strain 568), this protein is Dihydroxy-acid dehydratase.